The primary structure comprises 213 residues: N-(5'-phosphoribosyl)anthranilate isomerase (213 aa).

It belongs to the TrpF family.

The catalysed reaction is N-(5-phospho-beta-D-ribosyl)anthranilate = 1-(2-carboxyphenylamino)-1-deoxy-D-ribulose 5-phosphate. Its pathway is amino-acid biosynthesis; L-tryptophan biosynthesis; L-tryptophan from chorismate: step 3/5. The polypeptide is N-(5'-phosphoribosyl)anthranilate isomerase (Caulobacter sp. (strain K31)).